The following is a 389-amino-acid chain: Succinate--CoA ligase [ADP-forming] subunit beta (389 aa).

In terms of domain architecture, ATP-grasp spans 9–236 (KELFAKHGVP…RDATDPLELK (228 aa)). ATP contacts are provided by residues lysine 45, 52–54 (GRG), serine 94, and glutamate 99. Mg(2+)-binding residues include asparagine 191 and aspartate 205. Substrate-binding positions include asparagine 256 and 318–320 (GIT).

The protein belongs to the succinate/malate CoA ligase beta subunit family. In terms of assembly, heterotetramer of two alpha and two beta subunits. Mg(2+) serves as cofactor.

It catalyses the reaction succinate + ATP + CoA = succinyl-CoA + ADP + phosphate. The catalysed reaction is GTP + succinate + CoA = succinyl-CoA + GDP + phosphate. Its pathway is carbohydrate metabolism; tricarboxylic acid cycle; succinate from succinyl-CoA (ligase route): step 1/1. Functionally, succinyl-CoA synthetase functions in the citric acid cycle (TCA), coupling the hydrolysis of succinyl-CoA to the synthesis of either ATP or GTP and thus represents the only step of substrate-level phosphorylation in the TCA. The beta subunit provides nucleotide specificity of the enzyme and binds the substrate succinate, while the binding sites for coenzyme A and phosphate are found in the alpha subunit. In Rhodococcus erythropolis (strain PR4 / NBRC 100887), this protein is Succinate--CoA ligase [ADP-forming] subunit beta.